Consider the following 233-residue polypeptide: Phosphoribosylformylglycinamidine synthase subunit PurQ (233 aa).

The Glutamine amidotransferase type-1 domain maps to 3 to 233; sequence SAILVFPGIN…GLVEHLAKAA (231 aa). Residue Cys-87 is the Nucleophile of the active site. Active-site residues include His-204 and Glu-206.

Part of the FGAM synthase complex composed of 1 PurL, 1 PurQ and 2 PurS subunits.

The protein resides in the cytoplasm. The enzyme catalyses N(2)-formyl-N(1)-(5-phospho-beta-D-ribosyl)glycinamide + L-glutamine + ATP + H2O = 2-formamido-N(1)-(5-O-phospho-beta-D-ribosyl)acetamidine + L-glutamate + ADP + phosphate + H(+). It carries out the reaction L-glutamine + H2O = L-glutamate + NH4(+). It functions in the pathway purine metabolism; IMP biosynthesis via de novo pathway; 5-amino-1-(5-phospho-D-ribosyl)imidazole from N(2)-formyl-N(1)-(5-phospho-D-ribosyl)glycinamide: step 1/2. Its function is as follows. Part of the phosphoribosylformylglycinamidine synthase complex involved in the purines biosynthetic pathway. Catalyzes the ATP-dependent conversion of formylglycinamide ribonucleotide (FGAR) and glutamine to yield formylglycinamidine ribonucleotide (FGAM) and glutamate. The FGAM synthase complex is composed of three subunits. PurQ produces an ammonia molecule by converting glutamine to glutamate. PurL transfers the ammonia molecule to FGAR to form FGAM in an ATP-dependent manner. PurS interacts with PurQ and PurL and is thought to assist in the transfer of the ammonia molecule from PurQ to PurL. This Rhodopseudomonas palustris (strain BisB18) protein is Phosphoribosylformylglycinamidine synthase subunit PurQ.